We begin with the raw amino-acid sequence, 203 residues long: Outer-membrane lipoprotein carrier protein (203 aa).

Residues 1–21 (MKKLILIGCLMAGMNINVAWA) form the signal peptide.

The protein belongs to the LolA family. As to quaternary structure, monomer.

The protein localises to the periplasm. Participates in the translocation of lipoproteins from the inner membrane to the outer membrane. Only forms a complex with a lipoprotein if the residue after the N-terminal Cys is not an aspartate (The Asp acts as a targeting signal to indicate that the lipoprotein should stay in the inner membrane). In Photorhabdus laumondii subsp. laumondii (strain DSM 15139 / CIP 105565 / TT01) (Photorhabdus luminescens subsp. laumondii), this protein is Outer-membrane lipoprotein carrier protein.